Reading from the N-terminus, the 822-residue chain is Coiled-coil domain-containing protein 175 (822 aa).

Coiled-coil stretches lie at residues 129 to 164 (IIEISQIKRKIETMNNEVKFLTNKISELKSMNEVLG), 223 to 397 (IEKQ…KQMM), and 510 to 537 (HLIETLKEQLAQDKKDYVKKEERLIEEL).

This chain is Coiled-coil domain-containing protein 175 (Ccdc175), found in Mus musculus (Mouse).